The following is a 315-amino-acid chain: Acetyl-coenzyme A carboxylase carboxyl transferase subunit alpha (315 aa).

Residues 39–293 (RLQDKSSTLT…RADLIEQLDM (255 aa)) form the CoA carboxyltransferase C-terminal domain.

This sequence belongs to the AccA family. In terms of assembly, acetyl-CoA carboxylase is a heterohexamer composed of biotin carboxyl carrier protein (AccB), biotin carboxylase (AccC) and two subunits each of ACCase subunit alpha (AccA) and ACCase subunit beta (AccD).

Its subcellular location is the cytoplasm. The catalysed reaction is N(6)-carboxybiotinyl-L-lysyl-[protein] + acetyl-CoA = N(6)-biotinyl-L-lysyl-[protein] + malonyl-CoA. Its pathway is lipid metabolism; malonyl-CoA biosynthesis; malonyl-CoA from acetyl-CoA: step 1/1. Its function is as follows. Component of the acetyl coenzyme A carboxylase (ACC) complex. First, biotin carboxylase catalyzes the carboxylation of biotin on its carrier protein (BCCP) and then the CO(2) group is transferred by the carboxyltransferase to acetyl-CoA to form malonyl-CoA. The protein is Acetyl-coenzyme A carboxylase carboxyl transferase subunit alpha of Pseudomonas entomophila (strain L48).